The primary structure comprises 144 residues: Cytochrome c oxidase subunit 4 isoform 1, mitochondrial (144 aa).

At 1 to 73 the chain is on the mitochondrial matrix side; sequence SVVKSEDFSL…SFAEMNRGSN (73 aa). Position 4 is an N6-acetyllysine; alternate (lysine 4). Lysine 4 carries the post-translational modification N6-succinyllysine; alternate. Lysine 28 is subject to N6-acetyllysine. A phosphoserine mark is found at serine 31 and serine 33. Lysine 35 carries the post-translational modification N6-acetyllysine; alternate. N6-succinyllysine; alternate is present on lysine 35. An N6-acetyllysine modification is found at lysine 42. Residues 74–99 traverse the membrane as a helical segment; that stretch reads EWKTVVGGAMFFIGFTALIIMWQKHY. The Mitochondrial intermembrane segment spans residues 100–144; sequence VYGPLPQTFDKEWVGKQTKRMLDMKVNPIQGLASKWDYEKNEWKK.

This sequence belongs to the cytochrome c oxidase IV family. In terms of assembly, component of the cytochrome c oxidase (complex IV, CIV), a multisubunit enzyme composed of 14 subunits. The complex is composed of a catalytic core of 3 subunits MT-CO1, MT-CO2 and MT-CO3, encoded in the mitochondrial DNA, and 11 supernumerary subunits COX4I, COX5A, COX5B, COX6A, COX6B, COX6C, COX7A, COX7B, COX7C, COX8 and NDUFA4, which are encoded in the nuclear genome. The complex exists as a monomer or a dimer and forms supercomplexes (SCs) in the inner mitochondrial membrane with NADH-ubiquinone oxidoreductase (complex I, CI) and ubiquinol-cytochrome c oxidoreductase (cytochrome b-c1 complex, complex III, CIII), resulting in different assemblies (supercomplex SCI(1)III(2)IV(1) and megacomplex MCI(2)III(2)IV(2)). Interacts with PHB2; the interaction decreases in absence of SPHK2. Interacts with AFG1L. Interacts with ABCB7; this interaction allows the regulation of cellular iron homeostasis and cellular reactive oxygen species (ROS) levels in cardiomyocytes. Interacts with FLVCR2; this interaction occurs in the absence of heme and is disrupted upon heme binding. Interacts with IRGC.

It is found in the mitochondrion inner membrane. It functions in the pathway energy metabolism; oxidative phosphorylation. Its function is as follows. Component of the cytochrome c oxidase, the last enzyme in the mitochondrial electron transport chain which drives oxidative phosphorylation. The respiratory chain contains 3 multisubunit complexes succinate dehydrogenase (complex II, CII), ubiquinol-cytochrome c oxidoreductase (cytochrome b-c1 complex, complex III, CIII) and cytochrome c oxidase (complex IV, CIV), that cooperate to transfer electrons derived from NADH and succinate to molecular oxygen, creating an electrochemical gradient over the inner membrane that drives transmembrane transport and the ATP synthase. Cytochrome c oxidase is the component of the respiratory chain that catalyzes the reduction of oxygen to water. Electrons originating from reduced cytochrome c in the intermembrane space (IMS) are transferred via the dinuclear copper A center (CU(A)) of subunit 2 and heme A of subunit 1 to the active site in subunit 1, a binuclear center (BNC) formed by heme A3 and copper B (CU(B)). The BNC reduces molecular oxygen to 2 water molecules using 4 electrons from cytochrome c in the IMS and 4 protons from the mitochondrial matrix. In Hylobates agilis (Agile gibbon), this protein is Cytochrome c oxidase subunit 4 isoform 1, mitochondrial (COX4I1).